A 270-amino-acid chain; its full sequence is MWLLVSVILISRISSVGGEAMFCDFPKINHGILYDEEKYKPFSQVPTGEVFYYSCEYNFVSPSKSFWTRITCAEEGWSPTPKCLRLCFFPFVENGHSESSGQTHLEGDTVQIICNTGYRLQNNENNISCVERGWSTPPKCRSTISAEKCGPPPPIDNGDITSFLLSVYAPGSSVEYQCQNLYQLEGNNQITCRNGQWSEPPKCLDPCVISQEIMEKYNIKLKWTNQQKLYSRTGDIVEFVCKSGYHPTKSHSFRAMCQNGKLVYPSCEEK.

Positions methionine 1–glycine 18 are cleaved as a signal peptide. Sushi domains are found at residues phenylalanine 22–leucine 84, arginine 85–serine 142, glutamate 147–aspartate 205, and proline 206–glutamate 268. Cystine bridges form between cysteine 23/cysteine 72, cysteine 55/cysteine 83, cysteine 87/cysteine 129, cysteine 114/cysteine 140, cysteine 149/cysteine 192, cysteine 178/cysteine 203, cysteine 207/cysteine 257, and cysteine 241/cysteine 267. Residue asparagine 126 is glycosylated (N-linked (GlcNAc...) asparagine).

In terms of assembly, head-to-tail homodimer and heterodimer with CFHR1 or CFHR5. N-glycosylated. Expressed by the liver and secreted in plasma.

The protein resides in the secreted. Its function is as follows. Involved in complement regulation. The dimerized forms have avidity for tissue-bound complement fragments and efficiently compete with the physiological complement inhibitor CFH. Can associate with lipoproteins and may play a role in lipid metabolism. This chain is Complement factor H-related protein 2 (CFHR2), found in Homo sapiens (Human).